The chain runs to 201 residues: Small ribosomal subunit protein uS4c (201 aa).

Residues Met89–Pro157 form the S4 RNA-binding domain.

It belongs to the universal ribosomal protein uS4 family. Part of the 30S ribosomal subunit. Contacts protein S5. The interaction surface between S4 and S5 is involved in control of translational fidelity.

It localises to the plastid. Its subcellular location is the chloroplast. One of the primary rRNA binding proteins, it binds directly to 16S rRNA where it nucleates assembly of the body of the 30S subunit. Its function is as follows. With S5 and S12 plays an important role in translational accuracy. The chain is Small ribosomal subunit protein uS4c (rps4) from Triticum aestivum (Wheat).